Here is a 391-residue protein sequence, read N- to C-terminus: Toluene efflux pump periplasmic linker protein TtgG (391 aa).

The signal sequence occupies residues 1–32 (MRAERWSQTVRQIRSPRALRVIPLTALMLISG). Cys-33 carries N-palmitoyl cysteine lipidation. The S-diacylglycerol cysteine moiety is linked to residue Cys-33. Positions 107 to 136 (RTYEAQLRRAEANRTSAQNLARRYETLLKT) form a coiled coil.

It belongs to the membrane fusion protein (MFP) (TC 8.A.1) family.

The protein localises to the cell inner membrane. The periplasmic linker component of an organic solvent efflux pump. Involved in export of a number of organic solvents, including toluene and styrene. This is the most important solvent efflux pump in this strain, although it can export AMP and some antibiotics. The sequence is that of Toluene efflux pump periplasmic linker protein TtgG (ttgG) from Pseudomonas putida (strain DOT-T1E).